The chain runs to 500 residues: Probable cytosol aminopeptidase (500 aa).

2 residues coordinate Mn(2+): lysine 267 and aspartate 272. The active site involves lysine 279. Aspartate 290, aspartate 349, and glutamate 351 together coordinate Mn(2+). Arginine 353 is a catalytic residue.

It belongs to the peptidase M17 family. It depends on Mn(2+) as a cofactor.

It localises to the cytoplasm. The catalysed reaction is Release of an N-terminal amino acid, Xaa-|-Yaa-, in which Xaa is preferably Leu, but may be other amino acids including Pro although not Arg or Lys, and Yaa may be Pro. Amino acid amides and methyl esters are also readily hydrolyzed, but rates on arylamides are exceedingly low.. It catalyses the reaction Release of an N-terminal amino acid, preferentially leucine, but not glutamic or aspartic acids.. In terms of biological role, presumably involved in the processing and regular turnover of intracellular proteins. Catalyzes the removal of unsubstituted N-terminal amino acids from various peptides. The polypeptide is Probable cytosol aminopeptidase (Tolumonas auensis (strain DSM 9187 / NBRC 110442 / TA 4)).